An 84-amino-acid polypeptide reads, in one-letter code: Esculentin-1SIa (84 aa).

Positions 1–22 are cleaved as a signal peptide; the sequence is MFTLKKPLLLIVLLGIISLSLC. Positions 23-36 are cleaved as a propeptide — removed in mature form; it reads EQERAADEDEGSEI. A disulfide bond links Cys-78 and Cys-84.

Expressed by the skin glands.

It localises to the secreted. In terms of biological role, has antimicrobial activity against Gram-negative bacterium E.coli ATCC 8739 (MIC=6.3 ug), against Gram positive bacteria S.aureus ATCC 6538 (MIC=3.1 ug), methicillin-resistant S.aureus ATCC 43300 (MIC=25 ug) and B.subtilis ATCC 6633 (MIC=25 ug). Has no activity against fungus C.albicans ATCC 90028. This is Esculentin-1SIa from Odorrana ishikawae (Ishikawa's frog).